The sequence spans 336 residues: Holliday junction branch migration complex subunit RuvB (336 aa).

Residues 1 to 181 (MDRIVEIEKF…FGMQFRLEFY (181 aa)) are large ATPase domain (RuvB-L). Residues Leu-20, Arg-21, Gly-62, Lys-65, Thr-66, Thr-67, 128–130 (EDF), Arg-171, Tyr-181, and Arg-218 each bind ATP. A Mg(2+)-binding site is contributed by Thr-66. The small ATPAse domain (RuvB-S) stretch occupies residues 182 to 252 (KNEELAIILE…RAKEALDSLG (71 aa)). The interval 255 to 336 (ELGFDAMDLR…KYNKGLFDEK (82 aa)) is head domain (RuvB-H). DNA-binding residues include Arg-309 and Arg-314.

It belongs to the RuvB family. In terms of assembly, homohexamer. Forms an RuvA(8)-RuvB(12)-Holliday junction (HJ) complex. HJ DNA is sandwiched between 2 RuvA tetramers; dsDNA enters through RuvA and exits via RuvB. An RuvB hexamer assembles on each DNA strand where it exits the tetramer. Each RuvB hexamer is contacted by two RuvA subunits (via domain III) on 2 adjacent RuvB subunits; this complex drives branch migration. In the full resolvosome a probable DNA-RuvA(4)-RuvB(12)-RuvC(2) complex forms which resolves the HJ.

It localises to the cytoplasm. The catalysed reaction is ATP + H2O = ADP + phosphate + H(+). The RuvA-RuvB-RuvC complex processes Holliday junction (HJ) DNA during genetic recombination and DNA repair, while the RuvA-RuvB complex plays an important role in the rescue of blocked DNA replication forks via replication fork reversal (RFR). RuvA specifically binds to HJ cruciform DNA, conferring on it an open structure. The RuvB hexamer acts as an ATP-dependent pump, pulling dsDNA into and through the RuvAB complex. RuvB forms 2 homohexamers on either side of HJ DNA bound by 1 or 2 RuvA tetramers; 4 subunits per hexamer contact DNA at a time. Coordinated motions by a converter formed by DNA-disengaged RuvB subunits stimulates ATP hydrolysis and nucleotide exchange. Immobilization of the converter enables RuvB to convert the ATP-contained energy into a lever motion, pulling 2 nucleotides of DNA out of the RuvA tetramer per ATP hydrolyzed, thus driving DNA branch migration. The RuvB motors rotate together with the DNA substrate, which together with the progressing nucleotide cycle form the mechanistic basis for DNA recombination by continuous HJ branch migration. Branch migration allows RuvC to scan DNA until it finds its consensus sequence, where it cleaves and resolves cruciform DNA. The polypeptide is Holliday junction branch migration complex subunit RuvB (Campylobacter lari (strain RM2100 / D67 / ATCC BAA-1060)).